Here is a 122-residue protein sequence, read N- to C-terminus: Small ribosomal subunit protein uS12 (122 aa).

Asp89 carries the 3-methylthioaspartic acid modification.

Belongs to the universal ribosomal protein uS12 family. As to quaternary structure, part of the 30S ribosomal subunit. Contacts proteins S8 and S17. May interact with IF1 in the 30S initiation complex.

Functionally, with S4 and S5 plays an important role in translational accuracy. Interacts with and stabilizes bases of the 16S rRNA that are involved in tRNA selection in the A site and with the mRNA backbone. Located at the interface of the 30S and 50S subunits, it traverses the body of the 30S subunit contacting proteins on the other side and probably holding the rRNA structure together. The combined cluster of proteins S8, S12 and S17 appears to hold together the shoulder and platform of the 30S subunit. The sequence is that of Small ribosomal subunit protein uS12 from Corynebacterium glutamicum (strain R).